A 33-amino-acid chain; its full sequence is Cytochrome b6-f complex subunit 6 (33 aa).

Residues 4–24 (ITIISYFGLLLASIIFTLVLF) traverse the membrane as a helical segment.

It belongs to the PetL family. As to quaternary structure, the 4 large subunits of the cytochrome b6-f complex are cytochrome b6, subunit IV (17 kDa polypeptide, PetD), cytochrome f and the Rieske protein, while the 4 small subunits are PetG, PetL, PetM and PetN. The complex functions as a dimer.

It localises to the plastid. The protein resides in the chloroplast thylakoid membrane. Functionally, component of the cytochrome b6-f complex, which mediates electron transfer between photosystem II (PSII) and photosystem I (PSI), cyclic electron flow around PSI, and state transitions. PetL is important for photoautotrophic growth as well as for electron transfer efficiency and stability of the cytochrome b6-f complex. In Pinus mugo (Dwarf mountain pine), this protein is Cytochrome b6-f complex subunit 6.